The sequence spans 482 residues: FAD-dependent monooxygenase esdpE (482 aa).

The signal sequence occupies residues 1–21 (MGAERLKVIIVGGSIAGLTLA). Glutamate 35 and arginine 108 together coordinate FAD. An N-linked (GlcNAc...) asparagine glycan is attached at asparagine 243. The FAD site is built by aspartate 308 and alanine 321. The chain crosses the membrane as a helical span at residues 440 to 460 (LFSGSLLLIMSVALLFGVICW).

Belongs to the paxM FAD-dependent monooxygenase family. FAD is required as a cofactor.

It is found in the membrane. The protein operates within secondary metabolite biosynthesis; terpenoid biosynthesis. Its function is as follows. FAD-dependent monooxygenase; part of the cluster that mediates the biosynthesis of shearones, diterpenoid pyrones (DPs) which are structurally diverse meroterpenoids consisting of a diterpene linked by a pyrone, and which may exhibit a range of bioactivities. Within the pathway, esdpE takes part to the biosynthesis of the molecular scaffold by catalyzing the formation of an (S)-epoxide ring at the terminal olefin of the geranylgeranyl group. The molecular scaffold is commonly biosynthesized by a series of enzymes including the non-reducing polyketide synthase (NR-PKS) esdpA that generates an alpha-pyrone; the prenyltransferase esdpC that attaches a geranylgeranyl pyrophosphate (GGPP) produced by the GGPP synthase (GGPPS) esdpD onto the pyrone unit; the FAD-dependent monooxygenase esdpE that converts an olefin on the diterpene unit into an epoxide; and the terpene cyclase esdpB that catalyzes the cyclization reactions to give the molecular backbone shearone A. In the modification steps, esdpF oxidizes the hydroxy group to a ketone at C-3 and esdpG then attaches hydroxy groups at both C-11 and C-12. After that, esdpI hydroxylates at C-20 and esdpH hydroxylates at C-6'. The ether bridge is generated by nucleophilic attack of the hydroxy group at C-20 to the carbonyl carbon at C-3. EsdpH can also functions prior to esdpI. The different combinations of these modification enzymes lead to the production of diverse shearone derivatives, shearone I being the end product of the pathway. The alpha-ketoglutarate-dependent dioxygenase esdpJ seems not to be involved in this pathway. This chain is FAD-dependent monooxygenase esdpE, found in Penicillium shearii (Eupenicillium shearii).